Here is a 337-residue protein sequence, read N- to C-terminus: UDP-N-acetylenolpyruvoylglucosamine reductase (337 aa).

The FAD-binding PCMH-type domain maps to 16–187; sequence ALPGRAARYQ…TSVIFRLAKA (172 aa). Residue Arg-160 is part of the active site. Ser-237 serves as the catalytic Proton donor. Glu-333 is a catalytic residue.

It depends on FAD as a cofactor.

Its subcellular location is the cytoplasm. It catalyses the reaction UDP-N-acetyl-alpha-D-muramate + NADP(+) = UDP-N-acetyl-3-O-(1-carboxyvinyl)-alpha-D-glucosamine + NADPH + H(+). It functions in the pathway cell wall biogenesis; peptidoglycan biosynthesis. In terms of biological role, cell wall formation. The polypeptide is UDP-N-acetylenolpyruvoylglucosamine reductase (Dechloromonas aromatica (strain RCB)).